The primary structure comprises 538 residues: Mevalonate kinase erg12 (538 aa).

A disordered region spans residues 1–87 (MGNPRGRRTN…RNMSRKPSSP (87 aa)). Positions 9-29 (TNGSIKTSKGTQRGTVSNLLS) are enriched in polar residues. Residues 57-69 (TTPSTTESTLKTT) are compositionally biased toward low complexity. ATP is bound by residues Lys-99, Ser-231, and 236–242 (GAGLGSS). Mg(2+) contacts are provided by Ser-242 and Glu-287. Asp-298 serves as the catalytic Proton acceptor.

Belongs to the GHMP kinase family. Mevalonate kinase subfamily. In terms of assembly, homodimer. Mg(2+) is required as a cofactor.

The protein localises to the cytoplasm. The protein resides in the cytosol. The enzyme catalyses (R)-mevalonate + ATP = (R)-5-phosphomevalonate + ADP + H(+). It participates in isoprenoid biosynthesis; isopentenyl diphosphate biosynthesis via mevalonate pathway; isopentenyl diphosphate from (R)-mevalonate: step 1/3. Mevalonate kinase; part of the second module of ergosterol biosynthesis pathway that includes the middle steps of the pathway. Erg12 converts mevalonate into 5-phosphomevalonate. The second module is carried out in the vacuole and involves the formation of farnesyl diphosphate, which is also an important intermediate in the biosynthesis of ubiquinone, dolichol, heme and prenylated proteins. Activity by the mevalonate kinase erg12 (AFUA_4G07780) first converts mevalonate into 5-phosphomevalonate. 5-phosphomevalonate is then further converted to 5-diphosphomevalonate by the phosphomevalonate kinase erg8 (AFUA_5G10680). The diphosphomevalonate decarboxylase mvd1 (AFUA_4G07130) then produces isopentenyl diphosphate. The isopentenyl-diphosphate delta-isomerase idi1 (AFUA_6G11160) then catalyzes the 1,3-allylic rearrangement of the homoallylic substrate isopentenyl (IPP) to its highly electrophilic allylic isomer, dimethylallyl diphosphate (DMAPP). Finally the farnesyl diphosphate synthase erg20 (AFUA_5G02450) catalyzes the sequential condensation of isopentenyl pyrophosphate with dimethylallyl pyrophosphate, and then with the resultant geranylpyrophosphate to the ultimate product farnesyl pyrophosphate. This Aspergillus fumigatus (strain ATCC MYA-4609 / CBS 101355 / FGSC A1100 / Af293) (Neosartorya fumigata) protein is Mevalonate kinase erg12.